A 212-amino-acid polypeptide reads, in one-letter code: Cyclin-dependent kinase inhibitor 3 (212 aa).

Positions 1-24 are disordered; the sequence is MKPPISIQASEFDSSDEEPADDEQ. Residues 1 to 34 form an interaction with CDK2 region; sequence MKPPISIQASEFDSSDEEPADDEQTPIQISWLPL. Over residues 13-24 the composition is skewed to acidic residues; sequence DSSDEEPADDEQ. One can recognise a Tyrosine-protein phosphatase domain in the interval 32–201; it reads LPLSRVNCSQ…FRDKLAAYLS (170 aa). Cys-140 serves as the catalytic Phosphocysteine intermediate.

It belongs to the protein-tyrosine phosphatase family. Interacts with cyclin-dependent kinases such as CDK1, CDK2 and CDK3. Does not interact with CDK4. Interacts (via C-terminus) with phosphorylated CDK2 (via C-terminal helix). Interacts with MS4A3 (via C-terminus); the interaction enhances CDKN3 enzymatic activity.

The protein localises to the cytoplasm. Its subcellular location is the perinuclear region. It carries out the reaction O-phospho-L-tyrosyl-[protein] + H2O = L-tyrosyl-[protein] + phosphate. The enzyme catalyses O-phospho-L-seryl-[protein] + H2O = L-seryl-[protein] + phosphate. The catalysed reaction is O-phospho-L-threonyl-[protein] + H2O = L-threonyl-[protein] + phosphate. In terms of biological role, may play a role in cell cycle regulation. Dual specificity phosphatase active toward substrates containing either phosphotyrosine or phosphoserine residues. Dephosphorylates CDK2 at 'Thr-160' in a cyclin-dependent manner. The protein is Cyclin-dependent kinase inhibitor 3 of Rattus norvegicus (Rat).